We begin with the raw amino-acid sequence, 102 residues long: N(4)-acetylcytidine amidohydrolase (102 aa).

The 88-residue stretch at 6 to 93 folds into the ASCH domain; it reads TFFSRFEQDI…IKEIYPGLDE (88 aa). The Proton acceptor role is filled by Lys-20. The Nucleophile role is filled by Thr-23. The active-site Proton donor is Glu-73.

The protein belongs to the N(4)-acetylcytidine amidohydrolase family.

It carries out the reaction N(4)-acetylcytidine + H2O = cytidine + acetate + H(+). It catalyses the reaction N(4)-acetyl-2'-deoxycytidine + H2O = 2'-deoxycytidine + acetate + H(+). The catalysed reaction is N(4)-acetylcytosine + H2O = cytosine + acetate + H(+). Its function is as follows. Catalyzes the hydrolysis of N(4)-acetylcytidine (ac4C). This chain is N(4)-acetylcytidine amidohydrolase, found in Serratia proteamaculans (strain 568).